Here is a 316-residue protein sequence, read N- to C-terminus: tRNA dimethylallyltransferase (316 aa).

17 to 24 (GPTASGKT) provides a ligand contact to ATP. Substrate is bound at residue 19–24 (TASGKT). Interaction with substrate tRNA stretches follow at residues 42–45 (DSAL), 166–170 (QRLSR), 247–252 (RCVGYR), and 280–287 (KRQITWLR).

Belongs to the IPP transferase family. Monomer. It depends on Mg(2+) as a cofactor.

It carries out the reaction adenosine(37) in tRNA + dimethylallyl diphosphate = N(6)-dimethylallyladenosine(37) in tRNA + diphosphate. Catalyzes the transfer of a dimethylallyl group onto the adenine at position 37 in tRNAs that read codons beginning with uridine, leading to the formation of N6-(dimethylallyl)adenosine (i(6)A). The protein is tRNA dimethylallyltransferase of Shigella dysenteriae serotype 1 (strain Sd197).